Reading from the N-terminus, the 187-residue chain is GTP cyclohydrolase 1 1 (187 aa).

The protein belongs to the GTP cyclohydrolase I family. In terms of assembly, homomer.

The enzyme catalyses GTP + H2O = 7,8-dihydroneopterin 3'-triphosphate + formate + H(+). It functions in the pathway cofactor biosynthesis; 7,8-dihydroneopterin triphosphate biosynthesis; 7,8-dihydroneopterin triphosphate from GTP: step 1/1. This is GTP cyclohydrolase 1 1 from Pseudomonas syringae pv. tomato (strain ATCC BAA-871 / DC3000).